Consider the following 152-residue polypeptide: Interleukin-3 (152 aa).

The first 19 residues, 1–19 (MSRLPVLLLLQLLVRPGLQ), serve as a signal peptide directing secretion. N-linked (GlcNAc...) asparagine glycans are attached at residues Asn34 and Asn89. An intrachain disulfide couples Cys35 to Cys103.

The protein belongs to the IL-3 family. As to quaternary structure, interacts with IL3RA. As to expression, activated T-cells, mast cells, natural killer cells.

The protein resides in the secreted. Cytokine secreted predominantly by activated T-lymphocytes as well as mast cells and osteoblastic cells that controls the production and differentiation of hematopoietic progenitor cells into lineage-restricted cells. Also stimulates mature basophils, eosinophils, and monocytes to become functionally activated. In addition, plays an important role in neural cell proliferation and survival. Participates as well in bone homeostasis and inhibits osteoclast differentiation by preventing NF-kappa-B nuclear translocation and activation. Mechanistically, exerts its biological effects through a receptor composed of IL3RA subunit and a signal transducing subunit IL3RB. Receptor stimulation results in the rapid activation of JAK2 kinase activity leading to STAT5-mediated transcriptional program. Alternatively, contributes to cell survival under oxidative stress in non-hematopoietic systems by activating pathways mediated by PI3K/AKT and ERK. The sequence is that of Interleukin-3 from Homo sapiens (Human).